The following is a 274-amino-acid chain: Rhamnulose-1-phosphate aldolase (274 aa).

E117 is a catalytic residue. Zn(2+) is bound by residues H141, H143, and H212.

It belongs to the aldolase class II family. RhaD subfamily. As to quaternary structure, homotetramer. The cofactor is Zn(2+).

It localises to the cytoplasm. The catalysed reaction is L-rhamnulose 1-phosphate = (S)-lactaldehyde + dihydroxyacetone phosphate. Its pathway is carbohydrate degradation; L-rhamnose degradation; glycerone phosphate from L-rhamnose: step 3/3. Catalyzes the reversible cleavage of L-rhamnulose-1-phosphate to dihydroxyacetone phosphate (DHAP) and L-lactaldehyde. The polypeptide is Rhamnulose-1-phosphate aldolase (Escherichia coli (strain K12 / MC4100 / BW2952)).